The following is a 488-amino-acid chain: Mannosylglycerate hydrolase MGH2 (488 aa).

Residues Y94, 98 to 101 (WNWD), Y146, Q167, and G227 contribute to the substrate site. The active-site Proton donor is D229. Substrate contacts are provided by residues R262 and 415–416 (YW). E459 acts as the Proton acceptor in catalysis.

Belongs to the glycosyl hydrolase 63 family.

The enzyme catalyses (2R)-2-O-(alpha-D-mannosyl)-glycerate + H2O = D-mannose + (R)-glycerate. It carries out the reaction (2R)-2-O-(alpha-D-glucopyranosyl)-glycerate + H2O = (R)-glycerate + D-glucose. With respect to regulation, activity is not dependent on divalent cations, but it is enhanced by Mn(2+). Its function is as follows. Catalyzes the hydrolysis of alpha-D-mannosyl-glycerate (MG) to D-glycerate and D-mannose. Can also hydrolyze alpha-D-glucopyranosyl-glycerate (GG)with lower efficiency. The polypeptide is Mannosylglycerate hydrolase MGH2 (Selaginella moellendorffii (Spikemoss)).